The sequence spans 254 residues: Probable protein ABIL5 (254 aa).

A disordered region spans residues 1–26 (MEVAEAGVDGVAGRRQQEEASGAAPF).

Belongs to the ABI family. Binds SCAR.

The protein resides in the cytoplasm. Its subcellular location is the cytoskeleton. Involved in regulation of actin and microtubule organization. Part of a WAVE complex that activates the Arp2/3 complex. This chain is Probable protein ABIL5, found in Oryza sativa subsp. japonica (Rice).